Consider the following 450-residue polypeptide: Tubulin alpha-1 chain (450 aa).

The GTP site is built by Q11, E71, G144, T145, T179, N206, and N228. E71 provides a ligand contact to Mg(2+). E254 is an active-site residue. A Phosphothreonine modification is found at T349. The interval 431 to 450 is disordered; that stretch reads DYEEVGGEGAEDDDEEGDEY.

It belongs to the tubulin family. As to quaternary structure, dimer of alpha and beta chains. A typical microtubule is a hollow water-filled tube with an outer diameter of 25 nm and an inner diameter of 15 nM. Alpha-beta heterodimers associate head-to-tail to form protofilaments running lengthwise along the microtubule wall with the beta-tubulin subunit facing the microtubule plus end conferring a structural polarity. Microtubules usually have 13 protofilaments but different protofilament numbers can be found in some organisms and specialized cells. The cofactor is Mg(2+). In terms of processing, undergoes a tyrosination/detyrosination cycle, the cyclic removal and re-addition of a C-terminal tyrosine residue by the enzymes tubulin tyrosine carboxypeptidase (TTCP) and tubulin tyrosine ligase (TTL), respectively.

The protein localises to the cytoplasm. It localises to the cytoskeleton. The enzyme catalyses GTP + H2O = GDP + phosphate + H(+). Functionally, tubulin is the major constituent of microtubules, a cylinder consisting of laterally associated linear protofilaments composed of alpha- and beta-tubulin heterodimers. Microtubules grow by the addition of GTP-tubulin dimers to the microtubule end, where a stabilizing cap forms. Below the cap, tubulin dimers are in GDP-bound state, owing to GTPase activity of alpha-tubulin. The chain is Tubulin alpha-1 chain (TUBA1) from Arabidopsis thaliana (Mouse-ear cress).